The chain runs to 419 residues: Sphingomyelin phosphodiesterase 2 (419 aa).

Glu-49 lines the Mg(2+) pocket. His-272 acts as the Proton acceptor in catalysis. 2 helical membrane-spanning segments follow: residues 326–346 (FSGYVIVWGLSLLVLLCVLAA) and 354–374 (AIILCIPSVGLVLVAGAVYLF).

It belongs to the neutral sphingomyelinase family. Requires Mg(2+) as cofactor. In terms of tissue distribution, although widely expressed in all tissues examined, except the spleen, high enzymatic activity occurs only in the brain.

The protein resides in the cell membrane. The enzyme catalyses a sphingomyelin + H2O = phosphocholine + an N-acylsphing-4-enine + H(+). It carries out the reaction an N-(acyl)-sphingosylphosphocholine + H2O = an N-acyl-sphingoid base + phosphocholine + H(+). The catalysed reaction is 1-O-octadecyl-sn-glycero-3-phosphocholine + H2O = 1-O-octadecyl-sn-glycerol + phosphocholine + H(+). It catalyses the reaction 1-hexadecanoyl-sn-glycero-3-phosphocholine + H2O = 1-hexadecanoyl-sn-glycerol + phosphocholine + H(+). The enzyme catalyses a sphingosylphosphocholine + H2O = a sphingoid base + phosphocholine + H(+). It carries out the reaction 1-O-hexadecyl-sn-glycero-3-phosphocholine + H2O = 1-O-hexadecyl-sn-glycerol + phosphocholine + H(+). Its pathway is lipid metabolism; sphingolipid metabolism. Its activity is regulated as follows. Activated by arachidonic acid. In terms of biological role, catalyzes, at least in vitro, the hydrolysis of sphingomyelin to form ceramide and phosphocholine. Also hydrolyzes 1-O-alkyl-2-lyso-sn-glycero-3-phosphocholine (lyso-platelet-activating factor) in vivo. Also acts on 1-acyl-2-lyso-sn-glycero-3-phosphocholine (lyso-PC) and sphingosylphosphocholine. The chain is Sphingomyelin phosphodiesterase 2 from Mus musculus (Mouse).